Reading from the N-terminus, the 316-residue chain is MTDKPTLHPRNRHQGRYDFPALIKAHPDLARFTITNPYGKPSIDFANPEAVRVFNRALLKAQYGVQHWDIPADYLCPPIPGRADYIHVLADLLAEDNAGDVPRGAQVRALDIGVGANCIYPLLGHSDYRWRFLGSDIDTTALASAKAIVQANKLDKAIGLRQQTQPKHILAGLLQADERFDVTLCNPPFHASREEATRGSQRKWKNLGKQDPKRKLPVLNFGGQNNELWCEGGEIRFVSQLVGESVQYAEQVLWFTSLVSKASNLPGIEAALKKAGVKALRIVEMGQGQKQSRMVAWSFHDDAARQAWHARRKSQA.

Belongs to the methyltransferase superfamily. METTL16/RlmF family.

Its subcellular location is the cytoplasm. It carries out the reaction adenosine(1618) in 23S rRNA + S-adenosyl-L-methionine = N(6)-methyladenosine(1618) in 23S rRNA + S-adenosyl-L-homocysteine + H(+). Specifically methylates the adenine in position 1618 of 23S rRNA. The chain is Ribosomal RNA large subunit methyltransferase F from Pseudomonas entomophila (strain L48).